Reading from the N-terminus, the 66-residue chain is Large ribosomal subunit protein bL35 (66 aa).

Over residues 1 to 16 (MPKQKTHRASAKRFKR) the composition is skewed to basic residues. The segment at 1 to 21 (MPKQKTHRASAKRFKRTGSGG) is disordered.

The protein belongs to the bacterial ribosomal protein bL35 family.

This chain is Large ribosomal subunit protein bL35, found in Streptococcus gordonii (strain Challis / ATCC 35105 / BCRC 15272 / CH1 / DL1 / V288).